The chain runs to 479 residues: Adenosylhomocysteinase (479 aa).

3 residues coordinate substrate: Thr-56, Asp-133, and Glu-199. An NAD(+)-binding site is contributed by 200-202; that stretch reads TTT. Residues Lys-229 and Asp-233 each contribute to the substrate site. NAD(+)-binding positions include Asn-234, 263-268, Glu-286, Asn-321, 342-344, and Asn-390; these read GYGDVG and IGH.

The protein belongs to the adenosylhomocysteinase family. As to quaternary structure, homotetramer. The cofactor is NAD(+).

It catalyses the reaction S-adenosyl-L-homocysteine + H2O = L-homocysteine + adenosine. The protein operates within amino-acid biosynthesis; L-homocysteine biosynthesis; L-homocysteine from S-adenosyl-L-homocysteine: step 1/1. Its function is as follows. Adenosylhomocysteine is a competitive inhibitor of S-adenosyl-L-methionine-dependent methyl transferase reactions; therefore adenosylhomocysteinase may play a key role in the control of methylations via regulation of the intracellular concentration of adenosylhomocysteine. The polypeptide is Adenosylhomocysteinase (Plasmodium chabaudi chabaudi).